The sequence spans 1481 residues: Chromosome partition protein MukB (1481 aa).

ATP is bound at residue 34–41 (GGNGAGKS). Coiled coils occupy residues 338–480 (SLVQ…QAYQ), 509–604 (QHLA…APVW), 780–805 (RAAR…ATLS), 835–1116 (EAEI…AKAG), and 1210–1265 (EAIE…LQAV). The interval 666-783 (PSGAEDSRMI…EVPLFGRAAR (118 aa)) is flexible hinge.

Belongs to the SMC family. MukB subfamily. In terms of assembly, homodimerization via its hinge domain. Binds to DNA via its C-terminal region. Interacts, and probably forms a ternary complex, with MukE and MukF via its C-terminal region. The complex formation is stimulated by calcium or magnesium. Interacts with tubulin-related protein FtsZ.

The protein resides in the cytoplasm. It is found in the nucleoid. In terms of biological role, plays a central role in chromosome condensation, segregation and cell cycle progression. Functions as a homodimer, which is essential for chromosome partition. Involved in negative DNA supercoiling in vivo, and by this means organize and compact chromosomes. May achieve or facilitate chromosome segregation by condensation DNA from both sides of a centrally located replisome during cell division. This Yersinia enterocolitica serotype O:8 / biotype 1B (strain NCTC 13174 / 8081) protein is Chromosome partition protein MukB.